The following is a 236-amino-acid chain: 2,3,4,5-tetrahydropyridine-2,6-dicarboxylate N-acetyltransferase (236 aa).

Belongs to the transferase hexapeptide repeat family. DapH subfamily.

The catalysed reaction is (S)-2,3,4,5-tetrahydrodipicolinate + acetyl-CoA + H2O = L-2-acetamido-6-oxoheptanedioate + CoA. The protein operates within amino-acid biosynthesis; L-lysine biosynthesis via DAP pathway; LL-2,6-diaminopimelate from (S)-tetrahydrodipicolinate (acetylase route): step 1/3. In terms of biological role, catalyzes the transfer of an acetyl group from acetyl-CoA to tetrahydrodipicolinate. The polypeptide is 2,3,4,5-tetrahydropyridine-2,6-dicarboxylate N-acetyltransferase (Geobacillus thermodenitrificans (strain NG80-2)).